A 213-amino-acid chain; its full sequence is Motile sperm domain-containing protein 1 (213 aa).

Positions 16 to 143 (PVFVFPTELI…KEHLTESVFF (128 aa)) constitute an MSP domain. Helical transmembrane passes span 159 to 179 (SLLT…PTLG) and 191 to 211 (LSVN…MAIL). Residues 205–208 (LITM) carry the Nuclear export signal motif.

In terms of tissue distribution, widely expressed. Shows highest expression in ribs, and slightly lower levels of expression in heart, kidney, muscle, thymus, calvariae and lung. Also detected at low levels in spleen and liver.

The protein resides in the endoplasmic reticulum membrane. It localises to the golgi apparatus membrane. Plays a role in differentiation and/or proliferation of mesenchymal stem cells. Proposed to be involved in epithelial-to-mesenchymal transition (EMT). However, another study suggests that it is not required for EMT or stem cell self-renewal and acts during later stages of differentiation. The protein is Motile sperm domain-containing protein 1 (Mospd1) of Mus musculus (Mouse).